Consider the following 693-residue polypeptide: E3 ubiquitin-protein ligase MARCHF7 (693 aa).

Methionine 1 carries the N-acetylmethionine modification. Disordered stretches follow at residues 1–43, 69–136, 158–281, 296–342, 361–430, 445–475, and 512–533; these read MESK…RDSS, ESEI…LGSF, LMDY…RRTT, FFSR…EGRA, LSQN…RDSN, AANRPQASGASSSAAAGGSTPELPQGGRNPG, and WNSTDGKNDKAKSAPSRDPEKL. Composition is skewed to polar residues over residues 14–36, 95–105, 112–132, 167–184, and 192–215; these read VQPSGSLSTRMVSGNRGTSLNDS, SCTNCASTSAG, LNTVSDSSWRHSQVPRSSSMV, DFTTSSYVQERVPSSYSQ, and AVSTLQLNSSSTNHQLPSDHQTVP. Positions 216 to 234 are enriched in low complexity; it reads SSRDSSRSSFRSHFSPRQS. The span at 236–267 shows a compositional bias: polar residues; that stretch reads SFRNSSHPAFSYFSSRNETPTISNSERGSSQR. Residues 268 to 279 show a composition bias toward basic and acidic residues; it reads PYRESSDNEGRR. The span at 296-305 shows a compositional bias: low complexity; that stretch reads FFSRRSSQDS. The segment covering 306–323 has biased composition (polar residues); the sequence is LNTRSLSSENYISPRTLT. Serine 318 bears the Phosphoserine mark. Positions 324–337 are enriched in low complexity; the sequence is SQSRNNGTSSSSDV. Position 390 is a phosphoserine (serine 390). Low complexity predominate over residues 451–463; that stretch reads ASGASSSAAAGGS. Over residues 517 to 533 the composition is skewed to basic and acidic residues; the sequence is GKNDKAKSAPSRDPEKL. An RING-CH-type zinc finger spans residues 546-616; the sequence is DDEEEGDLCR…ELCKEKLQLN (71 aa). Residues cysteine 554, cysteine 557, cysteine 572, cysteine 574, histidine 582, cysteine 585, cysteine 606, and cysteine 609 each contribute to the Zn(2+) site. Phosphothreonine is present on threonine 688. Serine 689 carries the post-translational modification Phosphoserine.

In terms of tissue distribution, expressed in brain, thymus, muscle and kidney.

Its subcellular location is the cytoplasm. The catalysed reaction is S-ubiquitinyl-[E2 ubiquitin-conjugating enzyme]-L-cysteine + [acceptor protein]-L-lysine = [E2 ubiquitin-conjugating enzyme]-L-cysteine + N(6)-ubiquitinyl-[acceptor protein]-L-lysine.. It functions in the pathway protein modification; protein ubiquitination. Functionally, E3 ubiquitin-protein ligase which may specifically enhance the E2 activity of HIP2. E3 ubiquitin ligases accept ubiquitin from an E2 ubiquitin-conjugating enzyme in the form of a thioester and then directly transfer the ubiquitin to targeted substrates. May be involved in T-cell proliferation by regulating LIF secretion. May play a role in lysosome homeostasis. Promotes 'Lys-6', 'Lys-11' and 'Lys-63'-linked mixed polyubiquitination on ATG14 leading to the inhibition of autophagy by impairing the interaction between ATG14 and STX7. Participates in the dopamine-mediated negative regulation of the NLRP3 inflammasome by promoting its uibiquitination and subsequent degradation. The protein is E3 ubiquitin-protein ligase MARCHF7 (Marchf7) of Mus musculus (Mouse).